The primary structure comprises 269 residues: Homocitrate synthase subunit alpha (269 aa).

Residues 3-255 (INIVDTTLRD…IYTGDFEDII (253 aa)) enclose the Pyruvate carboxyltransferase domain.

The protein belongs to the alpha-IPM synthase/homocitrate synthase family. In terms of assembly, heterodimer of an alpha and an omega chain.

The catalysed reaction is acetyl-CoA + 2-oxoglutarate + H2O = (2R)-homocitrate + CoA + H(+). This protein is a Fe-Mo-cofactor biosynthetic component. The chain is Homocitrate synthase subunit alpha (nifV-ALPHA) from Clostridium pasteurianum.